The primary structure comprises 368 residues: Microtubule-associated protein Jupiter (368 aa).

Ser30 carries the phosphoserine modification. Phosphothreonine is present on Thr41. Basic and acidic residues predominate over residues 81–93 (RRGQKSVDSHSRL). The tract at residues 81–106 (RRGQKSVDSHSRLFGEPSRPITPGKN) is disordered. Thr102 is subject to Phosphothreonine. Phosphoserine is present on residues Ser111, Ser146, and Ser157. Low complexity-rich tracts occupy residues 129 to 157 (NGNT…VSSS) and 238 to 248 (GRYGYSSQSRR). Disordered regions lie at residues 129-164 (NGNT…LKIN), 196-256 (SQGN…SPLN), and 316-368 (KPKK…SGLW). Polar residues predominate over residues 337 to 354 (GSDSAQTPTMNGANQVIN).

The protein belongs to the MAP Jupiter family.

Its subcellular location is the nucleus. It localises to the cytoplasm. The protein localises to the cytoskeleton. It is found in the spindle. Functionally, binds to all microtubule populations. The chain is Microtubule-associated protein Jupiter from Drosophila willistoni (Fruit fly).